Consider the following 92-residue polypeptide: RNA-binding protein Hfq (92 aa).

The region spanning 11-71 (DRFLNHLRVN…ISTIIPSSYV (61 aa)) is the Sm domain.

This sequence belongs to the Hfq family. In terms of assembly, homohexamer.

Its function is as follows. RNA chaperone that binds small regulatory RNA (sRNAs) and mRNAs to facilitate mRNA translational regulation in response to envelope stress, environmental stress and changes in metabolite concentrations. Also binds with high specificity to tRNAs. This Thermotoga maritima (strain ATCC 43589 / DSM 3109 / JCM 10099 / NBRC 100826 / MSB8) protein is RNA-binding protein Hfq.